A 73-amino-acid chain; its full sequence is Gas vesicle protein M2 (73 aa).

It belongs to the gas vesicle GvpA family. In terms of assembly, gvpF to GvpM interact with each other in vitro, and may form multi-subunit complex(es). Might interact with GvpA.

It is found in the gas vesicle. In terms of biological role, proteins GvpF to GvpM might be involved in nucleating gas vesicle formation. A minor component of the gas vesicle. Gas vesicles are hollow, gas filled proteinaceous nanostructures found in several microbial planktonic microorganisms. They allow positioning of halobacteria at the optimal depth for growth in the poorly aerated, shallow brine pools of their habitat. Its function is as follows. Expression of 2 c-vac DNA fragments containing 2 divergently transcribed regions (gvpE-gvpF-gvpG-gvpH-gvpI-gvpJ-gvpK-gvpL-gvpM and gvpA-gvpC-gvpN-gvpO) allows H.volcanii to produce gas vesicles. This Halobacterium salinarum (strain ATCC 700922 / JCM 11081 / NRC-1) (Halobacterium halobium) protein is Gas vesicle protein M2.